The chain runs to 309 residues: tRNA-cytidine(32) 2-sulfurtransferase (309 aa).

The short motif at 57 to 62 (SGGKDS) is the PP-loop motif element. 3 residues coordinate [4Fe-4S] cluster: cysteine 132, cysteine 135, and cysteine 223.

This sequence belongs to the TtcA family. As to quaternary structure, homodimer. The cofactor is Mg(2+). It depends on [4Fe-4S] cluster as a cofactor.

The protein resides in the cytoplasm. The catalysed reaction is cytidine(32) in tRNA + S-sulfanyl-L-cysteinyl-[cysteine desulfurase] + AH2 + ATP = 2-thiocytidine(32) in tRNA + L-cysteinyl-[cysteine desulfurase] + A + AMP + diphosphate + H(+). It functions in the pathway tRNA modification. In terms of biological role, catalyzes the ATP-dependent 2-thiolation of cytidine in position 32 of tRNA, to form 2-thiocytidine (s(2)C32). The sulfur atoms are provided by the cysteine/cysteine desulfurase (IscS) system. The polypeptide is tRNA-cytidine(32) 2-sulfurtransferase (Variovorax paradoxus (strain S110)).